A 130-amino-acid polypeptide reads, in one-letter code: Small ribosomal subunit protein uS9 (130 aa).

Belongs to the universal ribosomal protein uS9 family.

This is Small ribosomal subunit protein uS9 from Polaromonas naphthalenivorans (strain CJ2).